The following is a 554-amino-acid chain: Phenylalanine--tRNA ligase beta subunit (554 aa).

Residues 276–351 (LTPKSRIISV…INYGYEKFDG (76 aa)) form the B5 domain. Mg(2+) contacts are provided by aspartate 329, aspartate 335, glutamate 338, and glutamate 339.

Belongs to the phenylalanyl-tRNA synthetase beta subunit family. Type 2 subfamily. As to quaternary structure, tetramer of two alpha and two beta subunits. Mg(2+) is required as a cofactor.

It is found in the cytoplasm. It catalyses the reaction tRNA(Phe) + L-phenylalanine + ATP = L-phenylalanyl-tRNA(Phe) + AMP + diphosphate + H(+). This is Phenylalanine--tRNA ligase beta subunit from Methanococcus maripaludis (strain DSM 14266 / JCM 13030 / NBRC 101832 / S2 / LL).